Here is a 502-residue protein sequence, read N- to C-terminus: Maturase K (502 aa).

Belongs to the intron maturase 2 family. MatK subfamily.

It localises to the plastid. It is found in the chloroplast. In terms of biological role, usually encoded in the trnK tRNA gene intron. Probably assists in splicing its own and other chloroplast group II introns. The sequence is that of Maturase K from Spiraea cantoniensis (Reeve's meadowsweet).